A 159-amino-acid chain; its full sequence is Cyclic pyranopterin monophosphate synthase (159 aa).

Substrate is bound by residues 74–76 and 112–113; these read MCH and ME. Asp127 is a catalytic residue.

Belongs to the MoaC family. In terms of assembly, homohexamer; trimer of dimers.

It carries out the reaction (8S)-3',8-cyclo-7,8-dihydroguanosine 5'-triphosphate = cyclic pyranopterin phosphate + diphosphate. It functions in the pathway cofactor biosynthesis; molybdopterin biosynthesis. Its function is as follows. Catalyzes the conversion of (8S)-3',8-cyclo-7,8-dihydroguanosine 5'-triphosphate to cyclic pyranopterin monophosphate (cPMP). The polypeptide is Cyclic pyranopterin monophosphate synthase (Helicobacter hepaticus (strain ATCC 51449 / 3B1)).